We begin with the raw amino-acid sequence, 223 residues long: Ribosome maturation factor RimM (223 aa).

Positions 142–223 (ADEFYWVDLI…RIVVDWEADY (82 aa)) constitute a PRC barrel domain.

Belongs to the RimM family. Binds ribosomal protein uS19.

The protein resides in the cytoplasm. An accessory protein needed during the final step in the assembly of 30S ribosomal subunit, possibly for assembly of the head region. Essential for efficient processing of 16S rRNA. May be needed both before and after RbfA during the maturation of 16S rRNA. It has affinity for free ribosomal 30S subunits but not for 70S ribosomes. In Burkholderia multivorans (strain ATCC 17616 / 249), this protein is Ribosome maturation factor RimM.